We begin with the raw amino-acid sequence, 469 residues long: 3-isopropylmalate dehydratase large subunit (469 aa).

Residues Cys-347, Cys-408, and Cys-411 each contribute to the [4Fe-4S] cluster site.

This sequence belongs to the aconitase/IPM isomerase family. LeuC type 1 subfamily. Heterodimer of LeuC and LeuD. The cofactor is [4Fe-4S] cluster.

The enzyme catalyses (2R,3S)-3-isopropylmalate = (2S)-2-isopropylmalate. The protein operates within amino-acid biosynthesis; L-leucine biosynthesis; L-leucine from 3-methyl-2-oxobutanoate: step 2/4. Its function is as follows. Catalyzes the isomerization between 2-isopropylmalate and 3-isopropylmalate, via the formation of 2-isopropylmaleate. The protein is 3-isopropylmalate dehydratase large subunit of Actinobacillus pleuropneumoniae serotype 3 (strain JL03).